Consider the following 76-residue polypeptide: ATP synthase subunit 9, mitochondrial (76 aa).

A run of 2 helical transmembrane segments spans residues 11-31 and 53-73; these read IGAG…GIVF and ILGF…AFLI.

It belongs to the ATPase C chain family. In terms of assembly, F-type ATPases have 2 components, CF(1) - the catalytic core - and CF(0) - the membrane proton channel. CF(1) has five subunits: alpha(3), beta(3), gamma(1), delta(1), epsilon(1). CF(0) has three main subunits: a, b and c.

It localises to the mitochondrion membrane. In terms of biological role, this protein is one of the chains of the nonenzymatic membrane component (F0) of mitochondrial ATPase. The protein is ATP synthase subunit 9, mitochondrial (ATP9) of Chondrus crispus (Carrageen Irish moss).